The chain runs to 223 residues: Chorismate dehydratase (223 aa).

It belongs to the MqnA/MqnD family. MqnA subfamily.

The catalysed reaction is chorismate = 3-[(1-carboxyvinyl)-oxy]benzoate + H2O. Its pathway is quinol/quinone metabolism; menaquinone biosynthesis. Its function is as follows. Catalyzes the dehydration of chorismate into 3-[(1-carboxyvinyl)oxy]benzoate, a step in the biosynthesis of menaquinone (MK, vitamin K2). In Campylobacter jejuni subsp. jejuni serotype O:23/36 (strain 81-176), this protein is Chorismate dehydratase.